A 217-amino-acid chain; its full sequence is Small ribosomal subunit protein uS11m (217 aa).

A mitochondrion-targeting transit peptide spans 1 to 59 (MLLQPVWKGCRWTQFVRPIRRWNSTGTNRGVPFSFKDISNQEDITNISYPSSSDSVLTK).

Belongs to the universal ribosomal protein uS11 family. In terms of assembly, component of the mitochondrial small ribosomal subunit (mt-SSU). Mature yeast 74S mitochondrial ribosomes consist of a small (37S) and a large (54S) subunit. The 37S small subunit contains a 15S ribosomal RNA (15S mt-rRNA) and 34 different proteins. The 54S large subunit contains a 21S rRNA (21S mt-rRNA) and 46 different proteins.

The protein resides in the mitochondrion. In terms of biological role, component of the mitochondrial ribosome (mitoribosome), a dedicated translation machinery responsible for the synthesis of mitochondrial genome-encoded proteins, including at least some of the essential transmembrane subunits of the mitochondrial respiratory chain. The mitoribosomes are attached to the mitochondrial inner membrane and translation products are cotranslationally integrated into the membrane. In Saccharomyces cerevisiae (strain ATCC 204508 / S288c) (Baker's yeast), this protein is Small ribosomal subunit protein uS11m (MRPS18).